Here is a 253-residue protein sequence, read N- to C-terminus: Triosephosphate isomerase, cytosolic (253 aa).

2 residues coordinate substrate: asparagine 10 and lysine 12. Histidine 96 functions as the Electrophile in the catalytic mechanism. Glutamate 166 acts as the Proton acceptor in catalysis.

It belongs to the triosephosphate isomerase family. As to quaternary structure, homodimer. Starchy endosperm.

The protein resides in the cytoplasm. It catalyses the reaction D-glyceraldehyde 3-phosphate = dihydroxyacetone phosphate. Its pathway is carbohydrate biosynthesis; gluconeogenesis. The protein operates within carbohydrate degradation; glycolysis; D-glyceraldehyde 3-phosphate from glycerone phosphate: step 1/1. The protein is Triosephosphate isomerase, cytosolic of Hordeum vulgare (Barley).